Here is a 190-residue protein sequence, read N- to C-terminus: Xanthine phosphoribosyltransferase (190 aa).

Xanthine contacts are provided by L20 and N27. Position 128–132 (128–132 (ANGKA)) interacts with 5-phospho-alpha-D-ribose 1-diphosphate. K156 is a xanthine binding site.

This sequence belongs to the purine/pyrimidine phosphoribosyltransferase family. Xpt subfamily. Homodimer.

Its subcellular location is the cytoplasm. The catalysed reaction is XMP + diphosphate = xanthine + 5-phospho-alpha-D-ribose 1-diphosphate. The protein operates within purine metabolism; XMP biosynthesis via salvage pathway; XMP from xanthine: step 1/1. Converts the preformed base xanthine, a product of nucleic acid breakdown, to xanthosine 5'-monophosphate (XMP), so it can be reused for RNA or DNA synthesis. The chain is Xanthine phosphoribosyltransferase from Finegoldia magna (strain ATCC 29328 / DSM 20472 / WAL 2508) (Peptostreptococcus magnus).